We begin with the raw amino-acid sequence, 195 residues long: Protein LIGHT-DEPENDENT SHORT HYPOCOTYLS 4 (195 aa).

The segment covering 28–38 (TTTSSSSSSSS) has biased composition (low complexity). Disordered stretches follow at residues 28 to 51 (TTTS…RYEN) and 162 to 195 (SQAK…SSPN). The ALOG domain maps to 48-175 (RYENQKRRDW…ARGISYEKKK (128 aa)). A Nuclear localization signal motif is present at residues 173 to 177 (KKKRK).

The protein belongs to the plant homeotic and developmental regulators ALOG protein family. Induced by NAC054/CUC1 and NAC098/CUC2 in shoot organ boundary cells.

Its subcellular location is the nucleus. In terms of biological role, probable transcription regulator that acts as a developmental regulator by promoting cell growth in response to light. May suppress organ differentiation in the boundary region. This is Protein LIGHT-DEPENDENT SHORT HYPOCOTYLS 4 (LSH4) from Arabidopsis thaliana (Mouse-ear cress).